A 967-amino-acid polypeptide reads, in one-letter code: A disintegrin and metalloproteinase with thrombospondin motifs 1 (967 aa).

An N-terminal signal peptide occupies residues 1-54; sequence MQPEVPLGSGKLKPCSDMGDIQRAAKFRSSQSAHMLLLLLASITMLLCVRGAHG. Positions 55–252 are excised as a propeptide; it reads RPTEEDEELV…TGPGSIRKKR (198 aa). The segment at 198–252 is disordered; the sequence is RGSGGAKCGVMDEETLPTSNSGRESQNTPDQWPLRNPTPQGAGKPTGPGSIRKKR. The Cysteine switch signature appears at 203 to 210; it reads AKCGVMDE. Zn(2+) is bound at residue Cys-205. Over residues 213–227 the composition is skewed to polar residues; the sequence is LPTSNSGRESQNTPD. The region spanning 258–467 is the Peptidase M12B domain; that stretch reads RYVETMLVAD…GHGECLMDKP (210 aa). Residues Glu-261, Asp-344, and Asp-351 each contribute to the Ca(2+) site. 4 cysteine pairs are disulfide-bonded: Cys-333/Cys-385, Cys-362/Cys-367, Cys-379/Cys-462, and Cys-417/Cys-446. His-401 lines the Zn(2+) pocket. Residue Glu-402 is part of the active site. Zn(2+)-binding residues include His-405 and His-411. Cys-462 and Asp-465 together coordinate Ca(2+). Residues 476 to 558 form the Disintegrin domain; the sequence is DLPGTLYDAN…TDMKHFATPV (83 aa). Cystine bridges form between Cys-488–Cys-511, Cys-499–Cys-521, Cys-506–Cys-540, and Cys-534–Cys-545. Asn-547 is a glycosylation site (N-linked (GlcNAc...) asparagine). The 56-residue stretch at 559–614 folds into the TSP type-1 1 domain; that stretch reads HGSWGPWGPWGDCSRTCGGGVQYTMRECDNPVPKNGGKYCEGKRVRYRSCNIEDCP. Cystine bridges form between Cys-571/Cys-608, Cys-575/Cys-613, and Cys-586/Cys-598. N-linked (GlcNAc...) asparagine glycosylation is found at Asn-720, Asn-764, and Asn-782. The segment at 725–857 is spacer; it reads KKISGTVTST…PFNAIPTFSE (133 aa). 2 consecutive TSP type-1 domains span residues 854–910 and 911–967; these read TFSE…LPCP and RWQV…TQCS. A glycan (N-linked (GlcNAc...) asparagine) is linked at Asn-945.

Zn(2+) is required as a cofactor. In terms of processing, the precursor is cleaved by a furin endopeptidase. Glycosylated. Can be O-fucosylated by POFUT2 on a serine or a threonine residue found within the consensus sequence C1-X(2)-(S/T)-C2-G of the TSP type-1 repeat domains where C1 and C2 are the first and second cysteine residue of the repeat, respectively. Fucosylated repeats can then be further glycosylated by the addition of a beta-1,3-glucose residue by the glucosyltransferase, B3GALTL. Fucosylation mediates the efficient secretion of ADAMTS family members. Can also be C-glycosylated with one or two mannose molecules on tryptophan residues within the consensus sequence W-X-X-W of the TPRs, and N-glycosylated. These other glycosylations can also facilitate secretion.

It is found in the secreted. The protein localises to the extracellular space. It localises to the extracellular matrix. Metalloprotease which cleaves aggrecan, a cartilage proteoglycan, at the '1683-Glu-|-Leu-1684' site (within the chondroitin sulfate attachment domain), and may be involved in its turnover. Also cleaves COMP. Has angiogenic inhibitor activity. May play a critical role in follicular rupture. The polypeptide is A disintegrin and metalloproteinase with thrombospondin motifs 1 (Adamts1) (Rattus norvegicus (Rat)).